The sequence spans 337 residues: Cytoskeleton protein RodZ (337 aa).

Over 1–111 (MNTEATHDQN…LGKRRKKRDG (111 aa)) the chain is Cytoplasmic. The 53-residue stretch at 19–71 (LRNAREQLGLSQQAVAERLCLKVSTVRDIEEDKAPADLASTFLRGYIRSYARL) folds into the HTH cro/C1-type domain. Residues 30–49 (QQAVAERLCLKVSTVRDIEE) constitute a DNA-binding region (H-T-H motif). The chain crosses the membrane as a helical; Signal-anchor for type II membrane protein span at residues 112 to 132 (WLMTFTWLVLFVVIGLSGAWW). The Periplasmic segment spans residues 133-337 (WQDHKAQQEE…TLNAEQSPAQ (205 aa)). Residues 145 to 167 (TMADQSSAELSSNSEQGQSVPLN) are compositionally biased toward polar residues. A disordered region spans residues 145–236 (TMADQSSAEL…TAATTPDGAA (92 aa)). Residues 168-207 (TSTTTDPATTSTPPASVDTTATNTQTPVVTAPAPAVDPQQ) are compositionally biased toward low complexity. Residues 208 to 218 (NAVVSPSQANV) are compositionally biased toward polar residues. Positions 219–236 (DTAATPAPTAATTPDGAA) are enriched in low complexity.

Belongs to the RodZ family.

Its subcellular location is the cell inner membrane. Cytoskeletal protein that is involved in cell-shape control through regulation of the length of the long axis. This chain is Cytoskeleton protein RodZ, found in Escherichia coli O157:H7.